An 80-amino-acid polypeptide reads, in one-letter code: Small ribosomal subunit protein bS18A (80 aa).

This sequence belongs to the bacterial ribosomal protein bS18 family. Part of the 30S ribosomal subunit. Forms a tight heterodimer with protein bS6.

In terms of biological role, binds as a heterodimer with protein bS6 to the central domain of the 16S rRNA, where it helps stabilize the platform of the 30S subunit. In Rhodococcus jostii (strain RHA1), this protein is Small ribosomal subunit protein bS18A.